Reading from the N-terminus, the 282-residue chain is 4-diphosphocytidyl-2-C-methyl-D-erythritol kinase (282 aa).

Lys15 is an active-site residue. 98-108 (PMGGGVGGGSS) contributes to the ATP binding site. Asp140 is a catalytic residue.

The protein belongs to the GHMP kinase family. IspE subfamily.

It catalyses the reaction 4-CDP-2-C-methyl-D-erythritol + ATP = 4-CDP-2-C-methyl-D-erythritol 2-phosphate + ADP + H(+). The protein operates within isoprenoid biosynthesis; isopentenyl diphosphate biosynthesis via DXP pathway; isopentenyl diphosphate from 1-deoxy-D-xylulose 5-phosphate: step 3/6. Functionally, catalyzes the phosphorylation of the position 2 hydroxy group of 4-diphosphocytidyl-2C-methyl-D-erythritol. The polypeptide is 4-diphosphocytidyl-2-C-methyl-D-erythritol kinase (Azoarcus sp. (strain BH72)).